The primary structure comprises 254 residues: Hydroxyacylglutathione hydrolase (254 aa).

Residues H54, H56, D58, H59, H111, D130, and H168 each coordinate Zn(2+).

The protein belongs to the metallo-beta-lactamase superfamily. Glyoxalase II family. Monomer. Zn(2+) serves as cofactor.

The catalysed reaction is an S-(2-hydroxyacyl)glutathione + H2O = a 2-hydroxy carboxylate + glutathione + H(+). It functions in the pathway secondary metabolite metabolism; methylglyoxal degradation; (R)-lactate from methylglyoxal: step 2/2. Thiolesterase that catalyzes the hydrolysis of S-D-lactoyl-glutathione to form glutathione and D-lactic acid. The protein is Hydroxyacylglutathione hydrolase of Legionella pneumophila (strain Paris).